The chain runs to 148 residues: Thioredoxin H8 (148 aa).

In terms of domain architecture, Thioredoxin spans 1–145 (MGANVSTPDQ…LERKLNKYTQ (145 aa)). Residues cysteine 71 and cysteine 74 each act as nucleophile in the active site. Cysteines 71 and 74 form a disulfide.

This sequence belongs to the thioredoxin family. Plant H-type subfamily.

The protein resides in the cytoplasm. Its function is as follows. Probable thiol-disulfide oxidoreductase that may be involved in the redox regulation of a number of cytosolic enzymes. The polypeptide is Thioredoxin H8 (TRX8) (Arabidopsis thaliana (Mouse-ear cress)).